The sequence spans 251 residues: 3-dehydroquinate dehydratase (251 aa).

3-dehydroquinate-binding positions include 47-49 and arginine 83; that span reads EWR. Histidine 144 acts as the Proton donor/acceptor in catalysis. The Schiff-base intermediate with substrate role is filled by lysine 171. The 3-dehydroquinate site is built by arginine 214, serine 233, and glutamine 237.

Belongs to the type-I 3-dehydroquinase family. Homodimer.

It catalyses the reaction 3-dehydroquinate = 3-dehydroshikimate + H2O. It participates in metabolic intermediate biosynthesis; chorismate biosynthesis; chorismate from D-erythrose 4-phosphate and phosphoenolpyruvate: step 3/7. Involved in the third step of the chorismate pathway, which leads to the biosynthesis of aromatic amino acids. Catalyzes the cis-dehydration of 3-dehydroquinate (DHQ) and introduces the first double bond of the aromatic ring to yield 3-dehydroshikimate. The polypeptide is 3-dehydroquinate dehydratase (Klebsiella pneumoniae subsp. pneumoniae (strain ATCC 700721 / MGH 78578)).